Here is a 690-residue protein sequence, read N- to C-terminus: Guanylate cyclase soluble subunit alpha-1 (690 aa).

A Phosphoserine modification is found at Ser266. Positions 480–607 (TMLFSDIVGF…NNVTLANKFE (128 aa)) constitute a Guanylate cyclase domain.

Belongs to the adenylyl cyclase class-4/guanylyl cyclase family. As to quaternary structure, the active enzyme is formed by a heterodimer of an alpha and a beta subunit. Heterodimer with GUCY1B1. Mg(2+) is required as a cofactor. The cofactor is Mn(2+).

It localises to the cytoplasm. It carries out the reaction GTP = 3',5'-cyclic GMP + diphosphate. With respect to regulation, activated by nitric oxide in the presence of magnesium or manganese ions. In Rattus norvegicus (Rat), this protein is Guanylate cyclase soluble subunit alpha-1 (Gucy1a1).